We begin with the raw amino-acid sequence, 417 residues long: Serine hydroxymethyltransferase (417 aa).

(6S)-5,6,7,8-tetrahydrofolate-binding positions include Leu-121 and 125–127 (GHL). The residue at position 230 (Lys-230) is an N6-(pyridoxal phosphate)lysine. 355–357 (SPF) contacts (6S)-5,6,7,8-tetrahydrofolate.

It belongs to the SHMT family. In terms of assembly, homodimer. The cofactor is pyridoxal 5'-phosphate.

It localises to the cytoplasm. It catalyses the reaction (6R)-5,10-methylene-5,6,7,8-tetrahydrofolate + glycine + H2O = (6S)-5,6,7,8-tetrahydrofolate + L-serine. The protein operates within one-carbon metabolism; tetrahydrofolate interconversion. Its pathway is amino-acid biosynthesis; glycine biosynthesis; glycine from L-serine: step 1/1. In terms of biological role, catalyzes the reversible interconversion of serine and glycine with tetrahydrofolate (THF) serving as the one-carbon carrier. This reaction serves as the major source of one-carbon groups required for the biosynthesis of purines, thymidylate, methionine, and other important biomolecules. Also exhibits THF-independent aldolase activity toward beta-hydroxyamino acids, producing glycine and aldehydes, via a retro-aldol mechanism. The polypeptide is Serine hydroxymethyltransferase (Marinobacter nauticus (strain ATCC 700491 / DSM 11845 / VT8) (Marinobacter aquaeolei)).